A 414-amino-acid polypeptide reads, in one-letter code: 3-phosphoshikimate 1-carboxyvinyltransferase (414 aa).

K20, S21, and R25 together coordinate 3-phosphoshikimate. K20 is a binding site for phosphoenolpyruvate. Phosphoenolpyruvate is bound by residues G85 and R113. 6 residues coordinate 3-phosphoshikimate: S154, S155, Q156, S181, D296, and K323. Q156 is a binding site for phosphoenolpyruvate. D296 acts as the Proton acceptor in catalysis. Phosphoenolpyruvate contacts are provided by R327, R371, and K395.

Belongs to the EPSP synthase family. As to quaternary structure, monomer.

The protein localises to the cytoplasm. It carries out the reaction 3-phosphoshikimate + phosphoenolpyruvate = 5-O-(1-carboxyvinyl)-3-phosphoshikimate + phosphate. Its pathway is metabolic intermediate biosynthesis; chorismate biosynthesis. Its function is as follows. Catalyzes the transfer of the enolpyruvyl moiety of phosphoenolpyruvate (PEP) to the 5-hydroxyl of shikimate-3-phosphate (S3P) to produce enolpyruvyl shikimate-3-phosphate and inorganic phosphate. The chain is 3-phosphoshikimate 1-carboxyvinyltransferase from Saccharolobus islandicus (strain M.14.25 / Kamchatka #1) (Sulfolobus islandicus).